Consider the following 425-residue polypeptide: Serine--tRNA ligase 2 (425 aa).

An L-serine-binding site is contributed by 230–232; that stretch reads TAE. ATP is bound at residue 261-263; it reads REE. An L-serine-binding site is contributed by Glu284. Residue 348 to 351 participates in ATP binding; sequence EISS. Ser383 provides a ligand contact to L-serine.

The protein belongs to the class-II aminoacyl-tRNA synthetase family. Type-1 seryl-tRNA synthetase subfamily. In terms of assembly, homodimer. The tRNA molecule binds across the dimer.

Its subcellular location is the cytoplasm. The catalysed reaction is tRNA(Ser) + L-serine + ATP = L-seryl-tRNA(Ser) + AMP + diphosphate + H(+). It carries out the reaction tRNA(Sec) + L-serine + ATP = L-seryl-tRNA(Sec) + AMP + diphosphate + H(+). It functions in the pathway aminoacyl-tRNA biosynthesis; selenocysteinyl-tRNA(Sec) biosynthesis; L-seryl-tRNA(Sec) from L-serine and tRNA(Sec): step 1/1. Functionally, catalyzes the attachment of serine to tRNA(Ser). Is also able to aminoacylate tRNA(Sec) with serine, to form the misacylated tRNA L-seryl-tRNA(Sec), which will be further converted into selenocysteinyl-tRNA(Sec). This is Serine--tRNA ligase 2 from Lactiplantibacillus plantarum (strain ATCC BAA-793 / NCIMB 8826 / WCFS1) (Lactobacillus plantarum).